The sequence spans 226 residues: Adenylate kinase (226 aa).

11–16 (GSGKGT) lines the ATP pocket. Residues 31–64 (SAGEILKHALSVTKFHFNFNTDNMLNQINSGNLV) form an NMP region. AMP contacts are provided by residues 62-64 (NLV), 90-93 (GFPR), and Gln97. Residues 127–164 (GRQVHIKSGRTYHIKFNPPKLDGIDDITGEKLVIRADD) are LID. ATP-binding positions include Arg128 and 137–138 (TY). The AMP site is built by Arg161 and Arg172. Gln205 provides a ligand contact to ATP.

It belongs to the adenylate kinase family. Monomer.

The protein localises to the cytoplasm. It catalyses the reaction AMP + ATP = 2 ADP. It functions in the pathway purine metabolism; AMP biosynthesis via salvage pathway; AMP from ADP: step 1/1. Functionally, catalyzes the reversible transfer of the terminal phosphate group between ATP and AMP. Plays an important role in cellular energy homeostasis and in adenine nucleotide metabolism. The polypeptide is Adenylate kinase (Blochmanniella floridana).